A 572-amino-acid chain; its full sequence is Proline--tRNA ligase (572 aa).

The protein belongs to the class-II aminoacyl-tRNA synthetase family. ProS type 1 subfamily. As to quaternary structure, homodimer.

The protein localises to the cytoplasm. The enzyme catalyses tRNA(Pro) + L-proline + ATP = L-prolyl-tRNA(Pro) + AMP + diphosphate. Catalyzes the attachment of proline to tRNA(Pro) in a two-step reaction: proline is first activated by ATP to form Pro-AMP and then transferred to the acceptor end of tRNA(Pro). As ProRS can inadvertently accommodate and process non-cognate amino acids such as alanine and cysteine, to avoid such errors it has two additional distinct editing activities against alanine. One activity is designated as 'pretransfer' editing and involves the tRNA(Pro)-independent hydrolysis of activated Ala-AMP. The other activity is designated 'posttransfer' editing and involves deacylation of mischarged Ala-tRNA(Pro). The misacylated Cys-tRNA(Pro) is not edited by ProRS. The polypeptide is Proline--tRNA ligase (Haemophilus influenzae (strain PittGG)).